The following is a 281-amino-acid chain: D-arabinitol 2-dehydrogenase [ribulose-forming] (281 aa).

NADP(+) contacts are provided by leucine 31 and asparagine 52. Catalysis depends on serine 169, which acts as the Proton donor. 4 residues coordinate NADP(+): tyrosine 184, lysine 188, isoleucine 217, and threonine 219. Tyrosine 184 functions as the Proton acceptor in the catalytic mechanism. Catalysis depends on lysine 188, which acts as the Lowers pKa of active site Tyr.

Belongs to the short-chain dehydrogenases/reductases (SDR) family.

The enzyme catalyses D-arabinitol + NAD(+) = D-ribulose + NADH + H(+). The protein operates within carbohydrate metabolism; D-arabinitol metabolism. This is D-arabinitol 2-dehydrogenase [ribulose-forming] (ARD1) from Candida albicans (strain WO-1) (Yeast).